We begin with the raw amino-acid sequence, 598 residues long: Arginine--tRNA ligase (598 aa).

The 'HIGH' region motif lies at 139–149; that stretch reads ANPTGPMHVGH.

The protein belongs to the class-I aminoacyl-tRNA synthetase family. In terms of assembly, monomer.

Its subcellular location is the cytoplasm. It catalyses the reaction tRNA(Arg) + L-arginine + ATP = L-arginyl-tRNA(Arg) + AMP + diphosphate. This chain is Arginine--tRNA ligase, found in Bradyrhizobium sp. (strain BTAi1 / ATCC BAA-1182).